The following is a 227-amino-acid chain: Cytochrome c oxidase subunit 2 (227 aa).

The Mitochondrial intermembrane segment spans residues 1 to 14 (MAYPFQLGLQDATS). The chain crosses the membrane as a helical span at residues 15–45 (PIMEELLHFHDHTLMIVFLISSLVLYIISLM). Over 46 to 59 (LTTKLTHTSTMDAQ) the chain is Mitochondrial matrix. Residues 60–87 (EVETVWTILPAIILILIALLSLRILYMM) form a helical membrane-spanning segment. Residues 88–227 (DEINNPFLTM…YFETWSALMV (140 aa)) lie on the Mitochondrial intermembrane side of the membrane. Cu cation is bound by residues His-161, Cys-196, Glu-198, Cys-200, His-204, and Met-207. Glu-198 provides a ligand contact to Mg(2+). Tyr-218 is modified (phosphotyrosine).

Belongs to the cytochrome c oxidase subunit 2 family. Component of the cytochrome c oxidase (complex IV, CIV), a multisubunit enzyme composed of 14 subunits. The complex is composed of a catalytic core of 3 subunits MT-CO1, MT-CO2 and MT-CO3, encoded in the mitochondrial DNA, and 11 supernumerary subunits COX4I, COX5A, COX5B, COX6A, COX6B, COX6C, COX7A, COX7B, COX7C, COX8 and NDUFA4, which are encoded in the nuclear genome. The complex exists as a monomer or a dimer and forms supercomplexes (SCs) in the inner mitochondrial membrane with NADH-ubiquinone oxidoreductase (complex I, CI) and ubiquinol-cytochrome c oxidoreductase (cytochrome b-c1 complex, complex III, CIII), resulting in different assemblies (supercomplex SCI(1)III(2)IV(1) and megacomplex MCI(2)III(2)IV(2)). Found in a complex with TMEM177, COA6, COX18, COX20, SCO1 and SCO2. Interacts with TMEM177 in a COX20-dependent manner. Interacts with COX20. Interacts with COX16. Cu cation serves as cofactor.

The protein localises to the mitochondrion inner membrane. The catalysed reaction is 4 Fe(II)-[cytochrome c] + O2 + 8 H(+)(in) = 4 Fe(III)-[cytochrome c] + 2 H2O + 4 H(+)(out). Functionally, component of the cytochrome c oxidase, the last enzyme in the mitochondrial electron transport chain which drives oxidative phosphorylation. The respiratory chain contains 3 multisubunit complexes succinate dehydrogenase (complex II, CII), ubiquinol-cytochrome c oxidoreductase (cytochrome b-c1 complex, complex III, CIII) and cytochrome c oxidase (complex IV, CIV), that cooperate to transfer electrons derived from NADH and succinate to molecular oxygen, creating an electrochemical gradient over the inner membrane that drives transmembrane transport and the ATP synthase. Cytochrome c oxidase is the component of the respiratory chain that catalyzes the reduction of oxygen to water. Electrons originating from reduced cytochrome c in the intermembrane space (IMS) are transferred via the dinuclear copper A center (CU(A)) of subunit 2 and heme A of subunit 1 to the active site in subunit 1, a binuclear center (BNC) formed by heme A3 and copper B (CU(B)). The BNC reduces molecular oxygen to 2 water molecules using 4 electrons from cytochrome c in the IMS and 4 protons from the mitochondrial matrix. The polypeptide is Cytochrome c oxidase subunit 2 (MT-CO2) (Nyctereutes procyonoides (Raccoon dog)).